Reading from the N-terminus, the 103-residue chain is Co-chaperonin GroES (103 aa).

This sequence belongs to the GroES chaperonin family. In terms of assembly, heptamer of 7 subunits arranged in a ring. Interacts with the chaperonin GroEL.

The protein localises to the cytoplasm. Its function is as follows. Together with the chaperonin GroEL, plays an essential role in assisting protein folding. The GroEL-GroES system forms a nano-cage that allows encapsulation of the non-native substrate proteins and provides a physical environment optimized to promote and accelerate protein folding. GroES binds to the apical surface of the GroEL ring, thereby capping the opening of the GroEL channel. The protein is Co-chaperonin GroES of Synechocystis sp. (strain ATCC 27184 / PCC 6803 / Kazusa).